The following is a 157-amino-acid chain: Ribosome maturation factor RimP (157 aa).

It belongs to the RimP family.

It is found in the cytoplasm. Functionally, required for maturation of 30S ribosomal subunits. This Streptococcus thermophilus (strain ATCC BAA-491 / LMD-9) protein is Ribosome maturation factor RimP.